The chain runs to 188 residues: MKVILASASQRRQELLIRLCDEFDIMVSDFDEEKVVFKNSIDEYVQNIALGKAMDIKEKLKEDAIIISADTIVTLDDKILGKPKDEEDAFNMIKLLQGRSHKVYSGVVVINTKKDLILKNSVATEVVFSKMNDNEIRKYIETKEPLDKAGAYGIQGIGGIFVEEIRGCYYNVVGLPLNKLKTMLEEAI.

Asp70 (proton acceptor) is an active-site residue.

It belongs to the Maf family. YhdE subfamily. A divalent metal cation is required as a cofactor.

The protein resides in the cytoplasm. The enzyme catalyses dTTP + H2O = dTMP + diphosphate + H(+). It carries out the reaction UTP + H2O = UMP + diphosphate + H(+). Functionally, nucleoside triphosphate pyrophosphatase that hydrolyzes dTTP and UTP. May have a dual role in cell division arrest and in preventing the incorporation of modified nucleotides into cellular nucleic acids. In Clostridium botulinum (strain Alaska E43 / Type E3), this protein is dTTP/UTP pyrophosphatase.